The primary structure comprises 118 residues: Large ribosomal subunit protein uL18 (118 aa).

This sequence belongs to the universal ribosomal protein uL18 family. Part of the 50S ribosomal subunit; part of the 5S rRNA/L5/L18/L25 subcomplex. Contacts the 5S and 23S rRNAs.

This is one of the proteins that bind and probably mediate the attachment of the 5S RNA into the large ribosomal subunit, where it forms part of the central protuberance. The chain is Large ribosomal subunit protein uL18 from Campylobacter jejuni subsp. jejuni serotype O:2 (strain ATCC 700819 / NCTC 11168).